The chain runs to 341 residues: tRNA N6-adenosine threonylcarbamoyltransferase (341 aa).

Positions 110 and 114 each coordinate Fe cation. Substrate-binding positions include L133–G137, D166, G179, and N276. D304 is a Fe cation binding site.

The protein belongs to the KAE1 / TsaD family. It depends on Fe(2+) as a cofactor.

Its subcellular location is the cytoplasm. It carries out the reaction L-threonylcarbamoyladenylate + adenosine(37) in tRNA = N(6)-L-threonylcarbamoyladenosine(37) in tRNA + AMP + H(+). Its function is as follows. Required for the formation of a threonylcarbamoyl group on adenosine at position 37 (t(6)A37) in tRNAs that read codons beginning with adenine. Is involved in the transfer of the threonylcarbamoyl moiety of threonylcarbamoyl-AMP (TC-AMP) to the N6 group of A37, together with TsaE and TsaB. TsaD likely plays a direct catalytic role in this reaction. The chain is tRNA N6-adenosine threonylcarbamoyltransferase from Saccharophagus degradans (strain 2-40 / ATCC 43961 / DSM 17024).